We begin with the raw amino-acid sequence, 217 residues long: Outer-membrane lipoprotein LolB (217 aa).

The N-terminal stretch at 1-20 is a signal peptide; sequence MSKALRTLALSGLVLVGLSA. A lipid anchor (N-palmitoyl cysteine) is attached at cysteine 21. Residue cysteine 21 is the site of S-diacylglycerol cysteine attachment.

The protein belongs to the LolB family. Monomer.

It is found in the cell outer membrane. In terms of biological role, plays a critical role in the incorporation of lipoproteins in the outer membrane after they are released by the LolA protein. The sequence is that of Outer-membrane lipoprotein LolB from Xanthomonas oryzae pv. oryzae (strain MAFF 311018).